The primary structure comprises 398 residues: Elongation factor Tu (398 aa).

The region spanning 10-207 (KPHVNIGTIG…TVDEYIPEPE (198 aa)) is the tr-type G domain. Residues 19–26 (GHVDHGKT) form a G1 region. 19–26 (GHVDHGKT) lines the GTP pocket. Position 26 (threonine 26) interacts with Mg(2+). The interval 63 to 67 (GITIN) is G2. The G3 stretch occupies residues 84–87 (DAPG). GTP contacts are provided by residues 84–88 (DAPGH) and 139–142 (NKVD). The interval 139 to 142 (NKVD) is G4. The tract at residues 177-179 (SAL) is G5.

It belongs to the TRAFAC class translation factor GTPase superfamily. Classic translation factor GTPase family. EF-Tu/EF-1A subfamily. Monomer.

The protein localises to the cytoplasm. It carries out the reaction GTP + H2O = GDP + phosphate + H(+). Functionally, GTP hydrolase that promotes the GTP-dependent binding of aminoacyl-tRNA to the A-site of ribosomes during protein biosynthesis. The sequence is that of Elongation factor Tu from Streptococcus agalactiae serotype V (strain ATCC BAA-611 / 2603 V/R).